A 242-amino-acid chain; its full sequence is Uridylate kinase (242 aa).

Residue 16–19 (KVSG) coordinates ATP. Position 58 (Gly-58) interacts with UMP. 2 residues coordinate ATP: Gly-59 and Arg-63. UMP-binding positions include Asp-78 and 139–146 (TGNPFCTT). The ATP site is built by Thr-166, Gln-167, Tyr-172, and Asp-175.

It belongs to the UMP kinase family. As to quaternary structure, homohexamer.

The protein localises to the cytoplasm. It carries out the reaction UMP + ATP = UDP + ADP. It functions in the pathway pyrimidine metabolism; CTP biosynthesis via de novo pathway; UDP from UMP (UMPK route): step 1/1. Its activity is regulated as follows. Inhibited by UTP. In terms of biological role, catalyzes the reversible phosphorylation of UMP to UDP. The protein is Uridylate kinase of Rickettsia conorii (strain ATCC VR-613 / Malish 7).